Reading from the N-terminus, the 918-residue chain is von Willebrand factor A domain-containing protein DDB_G0292016 (918 aa).

Positions 44–172 (KRCGLYSLKN…NVKVRVVISS (129 aa)) constitute a VIT domain. One can recognise a VWFA domain in the interval 299 to 467 (EFIFLIDCSG…NMEKQVMKLL (169 aa)). The segment at 625-814 (VDIMNQSPPI…PSAPSQQKSV (190 aa)) is disordered. Positions 650 to 690 (ASGALSSSILSRKRSSSPSTATKRSSSSSFSSSYLSLSSSS) are enriched in low complexity. The segment covering 716 to 746 (YESDGGDQSSEQDEEEEDDCDDFHEDLDEDL) has biased composition (acidic residues). Positions 752–774 (DVDKKECEKECKKKDSSKVDLKV) are enriched in basic and acidic residues. A compositionally biased stretch (low complexity) spans 777-814 (SKVPLPSRSPSVSKPTTTSLLSPSPKSAPSAPSQQKSV).

The polypeptide is von Willebrand factor A domain-containing protein DDB_G0292016 (Dictyostelium discoideum (Social amoeba)).